The chain runs to 663 residues: MLQMPKLNEIPPGRAGRREARGEGRWPGQTGPEAARLEWRAQGQAGGARAPWDSWGSSRLPTQPGPGWSRCPPSLLCALSFQKSTMESKDEVSDTDSGIILQSGPDSPVSPMKELTHAVHKQQRALEARLEACLEELRRLCLREAELTGTLPAEYPLKPGEKAPKVRRRIGAAYKLDDWALHREDPLSSLERQLALQLQITEAARRLCLEENLSRQARRQRKHSMLQEEKKLQELQRCLVERRRNSEPPPAAALPLGRELSASDDSSLSDGLLLEEEESQVPKPPPESPAPPSRPLPPQTLEGLQPTGPEAGSPERAPVQNSPWKETSLDHPYEKPRKSSEPWSESSSPATTPQDGPSASSLWLLEPASYHVVPIRGVPGQWQGRTSAPATPEIQGRRGQSQSLRVDSFRAGPEGRGRSAFPRRRPTHYTVTVPDSCFPATKPPLPHAACHSCSEDSGSDVSSISHPTSPGSSSPDISFLQPLSPPKTHRHRGAWVPAGSRELVAHHPKLLLPPGYFPAGRYVVVAESPLPPGEWELRRAAPGPAYEEEGTPLRYQRLVPSRSRIVRTPSLKDSPAGRGLSKAAVSEELKWWHERARLRSTRPHSLDRQGAFRVRSLPLGREGFGRALGPRAQVPTVCVLRRSPDGAPVQVFVPEKGEIISQV.

A disordered region spans residues 1–68; sequence MLQMPKLNEI…RLPTQPGPGW (68 aa). A compositionally biased stretch (low complexity) spans 40–50; sequence RAQGQAGGARA. A coiled-coil region spans residues 118–147; it reads AVHKQQRALEARLEACLEELRRLCLREAEL. A Nuclear localization signal (NLS) 1 motif is present at residues 164-170; sequence PKVRRRI. Disordered regions lie at residues 242–362, 378–425, and 444–493; these read RRRN…ASSL, VPGQ…PRRR, and PLPH…RHRG. Positions 259–272 are enriched in low complexity; that stretch reads ELSASDDSSLSDGL. Residues 282–298 show a composition bias toward pro residues; it reads PKPPPESPAPPSRPLPP. Residues 327 to 340 are compositionally biased toward basic and acidic residues; the sequence is TSLDHPYEKPRKSS. The Nuclear localization signal (NLS) 2 motif lies at 332–338; the sequence is PYEKPRK. Over residues 350–361 the composition is skewed to polar residues; it reads ATTPQDGPSASS. Positions 422–428 match the Nuclear localization signal (NLS) 3 motif; it reads PRRRPTH. The segment covering 455–475 has biased composition (low complexity); it reads EDSGSDVSSISHPTSPGSSSP.

Interacts with IRAK1, NOD2 and RIPK2; the interaction takes place upon PRR stimulation. Interacts with YWHAQ/14-3-3T; the interaction increases upon PRR stimulation and is required for cellular signaling pathway activation and cytokine secretion. Interacts (via N-terminal domain) with CYTH1 and CYTH2 (via their N-terminal domains). Interacts with FBXW11 and BTRC; associates with SCF E3 ubiquitin-protein ligase complexes. Highly expressed in intestinal myeloid-derived cells and expressed in monocyte-derived macrophages upon induction by PRR activation.

It localises to the nucleus. The protein localises to the cytoplasm. Expressed in peripheral macrophages and intestinal myeloid-derived cells, is required for optimal PRR (pattern recognition receptor)-induced signaling, cytokine secretion, and bacterial clearance. Upon stimulation of a broad range of PRRs (pattern recognition receptor) such as NOD2 or TLR2, TLR3, TLR4, TLR5, TLR7 and TLR9, associates with YWHAQ/14-3-3T, which in turn leads to the recruitment and activation of MAP kinases and NF-kappa-B signaling complexes that amplifies PRR-induced downstream signals and cytokine secretion. In the intestine, regulates adherens junction stability by regulating the degradation of CYTH1 and CYTH2, probably acting as substrate cofactor for SCF E3 ubiquitin-protein ligase complexes. Stabilizes adherens junctions by limiting CYTH1-dependent ARF6 activation. In Homo sapiens (Human), this protein is Innate immunity activator protein.